The sequence spans 208 residues: Thymidylate kinase (208 aa).

Residue 10-17 (GPDGSGKT) participates in ATP binding.

This sequence belongs to the thymidylate kinase family.

The catalysed reaction is dTMP + ATP = dTDP + ADP. In terms of biological role, phosphorylation of dTMP to form dTDP in both de novo and salvage pathways of dTTP synthesis. This Listeria monocytogenes serotype 4b (strain CLIP80459) protein is Thymidylate kinase.